A 20-amino-acid polypeptide reads, in one-letter code: Unknown protein NF045 from 2D-PAGE (20 aa).

The polypeptide is Unknown protein NF045 from 2D-PAGE (Naegleria fowleri (Brain eating amoeba)).